Consider the following 361-residue polypeptide: MTQVYNFSAGPAMLPVEVLRRAEQELRNWHGLGTSVMEISHRSKEFMQVAEESEKDLRDLLQIPANYKVLFCHGGARAQFAAVPLNLLGDRNSADYIDGGYWAHSAIKEAQKYCTPNVIDVTTHDNGLTGIQPMKQWKLSDNAAYVHYCPNETIDGVAINEQPDFGNKVVVADYSSSILSRPIDISRYGVIYAGAQKNIGPAGLTLVIVREDLLGKAHTALPSILDYKVLADNDSMFNTPPTFAWYLSGLVFKWLKEQGGLGEMEKRNQAKAELLYGAIDRTGFYRNQVAITNRSWMNVPFQMADASLDKLFLSEAEAQGLQALKGHRVAGGMRASIYNAMPIEGVKALTDFMADFERRHG.

Residue Arg-42 coordinates L-glutamate. Pyridoxal 5'-phosphate contacts are provided by residues 76-77 (AR), Trp-102, Thr-153, Asp-173, and Gln-196. Lys-197 carries the post-translational modification N6-(pyridoxal phosphate)lysine. 238–239 (NT) is a pyridoxal 5'-phosphate binding site.

It belongs to the class-V pyridoxal-phosphate-dependent aminotransferase family. SerC subfamily. As to quaternary structure, homodimer. It depends on pyridoxal 5'-phosphate as a cofactor.

It localises to the cytoplasm. The enzyme catalyses O-phospho-L-serine + 2-oxoglutarate = 3-phosphooxypyruvate + L-glutamate. The catalysed reaction is 4-(phosphooxy)-L-threonine + 2-oxoglutarate = (R)-3-hydroxy-2-oxo-4-phosphooxybutanoate + L-glutamate. It functions in the pathway amino-acid biosynthesis; L-serine biosynthesis; L-serine from 3-phospho-D-glycerate: step 2/3. Its pathway is cofactor biosynthesis; pyridoxine 5'-phosphate biosynthesis; pyridoxine 5'-phosphate from D-erythrose 4-phosphate: step 3/5. In terms of biological role, catalyzes the reversible conversion of 3-phosphohydroxypyruvate to phosphoserine and of 3-hydroxy-2-oxo-4-phosphonooxybutanoate to phosphohydroxythreonine. In Yersinia pestis bv. Antiqua (strain Angola), this protein is Phosphoserine aminotransferase.